A 346-amino-acid polypeptide reads, in one-letter code: Fe(3+) ions import ATP-binding protein FbpC 2 (346 aa).

An ABC transporter domain is found at 5-235; sequence LEVDGVDKSF…PVDVPTAEFI (231 aa). 37–44 contacts ATP; that stretch reads GPSGCGKT.

Belongs to the ABC transporter superfamily. Fe(3+) ion importer (TC 3.A.1.10) family. In terms of assembly, the complex is composed of two ATP-binding proteins (FbpC), two transmembrane proteins (FbpB) and a solute-binding protein (FbpA).

It localises to the cell membrane. The enzyme catalyses Fe(3+)(out) + ATP + H2O = Fe(3+)(in) + ADP + phosphate + H(+). Part of the ABC transporter complex FbpABC involved in Fe(3+) ions import. Responsible for energy coupling to the transport system. This chain is Fe(3+) ions import ATP-binding protein FbpC 2, found in Rhodococcus jostii (strain RHA1).